Consider the following 273-residue polypeptide: tRNA pseudouridine synthase A (273 aa).

The active-site Nucleophile is Asp-52. A substrate-binding site is contributed by Tyr-110.

It belongs to the tRNA pseudouridine synthase TruA family. As to quaternary structure, homodimer.

The catalysed reaction is uridine(38/39/40) in tRNA = pseudouridine(38/39/40) in tRNA. In terms of biological role, formation of pseudouridine at positions 38, 39 and 40 in the anticodon stem and loop of transfer RNAs. The polypeptide is tRNA pseudouridine synthase A (Cupriavidus pinatubonensis (strain JMP 134 / LMG 1197) (Cupriavidus necator (strain JMP 134))).